A 45-amino-acid chain; its full sequence is Mu-conotoxin-like Cal 12.1.2a (45 aa).

4 disulfides stabilise this stretch: C3–C16, C11–C28, C18–C33, and C27–C39. P23 is subject to 4-hydroxyproline. 6'-bromotryptophan is present on residues W37 and W38. 4-hydroxyproline is present on P40. 6'-bromotryptophan is present on W44.

As to expression, expressed by the venom duct.

Its subcellular location is the secreted. Its function is as follows. Mu-conotoxins block voltage-gated sodium channels. This toxin reversibly blocks voltage-gated sodium channel in cephalopods, with no alteration in the voltage dependence of sodium conductance or on the kinetics of inactivation. The protein is Mu-conotoxin-like Cal 12.1.2a of Californiconus californicus (California cone).